The sequence spans 79 residues: Serine protease inhibitor Kazal-type 1-like (79 aa).

The N-terminal stretch at 1-23 is a signal peptide; the sequence is MKVAIIFLLSALALLNLAGNTTA. Residues 26 to 79 form the Kazal-like domain; the sequence is IGKKANCPNTLVGCPRDYDPVCGTDGKTYANECILCFENRKFGTSIRIQRRGLC. 3 disulfides stabilise this stretch: Cys32–Cys61, Cys39–Cys58, and Cys47–Cys79.

Seminal vesicle.

Its subcellular location is the secreted. Serine protease inhibitor which exhibits anti-trypsin activity. In the pancreas, protects against trypsin-catalyzed premature activation of zymogens. Its function is as follows. In the male reproductive tract, binds to sperm heads where it modulates sperm capacitance by inhibiting calcium uptake and nitrogen oxide (NO) production. The protein is Serine protease inhibitor Kazal-type 1-like of Rattus norvegicus (Rat).